Consider the following 173-residue polypeptide: Histone deacetylase complex subunit SAP30 homolog (173 aa).

The Atypical zinc finger occupies 21-69 (CCLLDDGDRCRNQAGNASYSKRIQKTVTQRRLKLSIDTAARHIYICDFH).

The protein belongs to the SAP30 family. Component of the class 1 Sin3-histone deacetylase complex (HDAC).

The protein resides in the nucleus. Functionally, required for the function of the class 1 Sin3-histone deacetylase complex (HDAC). This Aedes aegypti (Yellowfever mosquito) protein is Histone deacetylase complex subunit SAP30 homolog.